The primary structure comprises 97 residues: Conotoxin Cal6.1a (97 aa).

Residues 1–22 form the signal peptide; that stretch reads MKLTTVLVVALLVLAACQFTVT. Residues 23–46 are disordered; that stretch reads DNSGDDPENPSLRSVGENQNPDST. A propeptide spanning residues 23–68 is cleaved from the precursor; sequence DNSGDDPENPSLRSVGENQNPDSTKTITAWATRDMTNMRRGLNRPS. 3 disulfide bridges follow: cysteine 71–cysteine 87, cysteine 78–cysteine 91, and cysteine 86–cysteine 96.

The protein belongs to the conotoxin O1 superfamily. In terms of tissue distribution, expressed by the venom duct.

The protein resides in the secreted. Functionally, probable neurotoxin with unknown target. Possibly targets ion channels. This Californiconus californicus (California cone) protein is Conotoxin Cal6.1a.